Here is a 62-residue protein sequence, read N- to C-terminus: Large ribosomal subunit protein bL28 (62 aa).

Positions 1–27 (MAKECVITGRKSRSGNKRSHAMNSSKR) are disordered. Over residues 10 to 20 (RKSRSGNKRSH) the composition is skewed to basic residues.

The protein belongs to the bacterial ribosomal protein bL28 family.

In Listeria innocua serovar 6a (strain ATCC BAA-680 / CLIP 11262), this protein is Large ribosomal subunit protein bL28.